Consider the following 431-residue polypeptide: MKNLVEELKWRGLYHDSMPGTEEQLLKEVTSAYIGFDPTADSLHIGSMVQIILLVHLKNFGHQPIALVGGATGMIGDPSGKSDERNLLNEETLAKNVAGIKSVLSRFLDFNSKEQNAPIMVNNYDWMKEFSFIDFAREVGKRITVNYMMAKDSVKKRINGEGEGMSFTEFTYQLIQGYDFYHLYKNNNCLLQMGGSDQWGNITTGTELVRRMGGENAKAFALTTPLITKADGSKFGKSEGGNVWLDADKTSVYKFYQFWVNATDADAEKYIKIFTFLDKETIDALIAEHQTAPHLRILQKKLAEEITIFVHSKEELEKAIQASNILFGNSTADDLKKLDEKTFLEVFDGVPQAEIAKADLENGLDIVTVLNEKTGFFKSNGEARRALTANSISVNREKIKEDFVLTANDLINNQFVLLQSGKKNYFVIRVV.

Position 33 (tyrosine 33) interacts with L-tyrosine. The short motif at 38-47 is the 'HIGH' region element; that stretch reads PTADSLHIGS. Residues tyrosine 172 and glutamine 176 each coordinate L-tyrosine. The short motif at 234–238 is the 'KMSKS' region element; sequence KFGKS. Position 237 (lysine 237) interacts with ATP. The region spanning 364 to 431 is the S4 RNA-binding domain; sequence LDIVTVLNEK…KKNYFVIRVV (68 aa).

It belongs to the class-I aminoacyl-tRNA synthetase family. TyrS type 1 subfamily. As to quaternary structure, homodimer.

It is found in the cytoplasm. The enzyme catalyses tRNA(Tyr) + L-tyrosine + ATP = L-tyrosyl-tRNA(Tyr) + AMP + diphosphate + H(+). Its function is as follows. Catalyzes the attachment of tyrosine to tRNA(Tyr) in a two-step reaction: tyrosine is first activated by ATP to form Tyr-AMP and then transferred to the acceptor end of tRNA(Tyr). This chain is Tyrosine--tRNA ligase, found in Flavobacterium johnsoniae (strain ATCC 17061 / DSM 2064 / JCM 8514 / BCRC 14874 / CCUG 350202 / NBRC 14942 / NCIMB 11054 / UW101) (Cytophaga johnsonae).